The following is a 446-amino-acid chain: Argininosuccinate synthase (446 aa).

ATP contacts are provided by residues 17 to 25 (AFSGGLDTS) and alanine 43. Tyrosine 99 serves as a coordination point for L-citrulline. Residues glycine 129 and threonine 131 each coordinate ATP. Threonine 131, asparagine 135, and aspartate 136 together coordinate L-aspartate. Residue asparagine 135 participates in L-citrulline binding. Position 136 (aspartate 136) interacts with ATP. L-citrulline contacts are provided by arginine 139 and serine 192. An ATP-binding site is contributed by aspartate 194. Residues threonine 201, glutamate 203, and glutamate 280 each coordinate L-citrulline.

It belongs to the argininosuccinate synthase family. Type 2 subfamily. In terms of assembly, homotetramer.

Its subcellular location is the cytoplasm. The catalysed reaction is L-citrulline + L-aspartate + ATP = 2-(N(omega)-L-arginino)succinate + AMP + diphosphate + H(+). The protein operates within amino-acid biosynthesis; L-arginine biosynthesis; L-arginine from L-ornithine and carbamoyl phosphate: step 2/3. The protein is Argininosuccinate synthase of Burkholderia mallei (strain NCTC 10247).